A 189-amino-acid chain; its full sequence is Elongation factor P (189 aa).

Belongs to the elongation factor P family.

Its subcellular location is the cytoplasm. The protein operates within protein biosynthesis; polypeptide chain elongation. Functionally, involved in peptide bond synthesis. Stimulates efficient translation and peptide-bond synthesis on native or reconstituted 70S ribosomes in vitro. Probably functions indirectly by altering the affinity of the ribosome for aminoacyl-tRNA, thus increasing their reactivity as acceptors for peptidyl transferase. The protein is Elongation factor P of Rhizobium etli (strain CIAT 652).